The sequence spans 307 residues: Aspartate carbamoyltransferase catalytic subunit (307 aa).

The carbamoyl phosphate site is built by arginine 59 and threonine 60. Residue lysine 87 coordinates L-aspartate. 3 residues coordinate carbamoyl phosphate: arginine 109, histidine 137, and glutamine 140. L-aspartate contacts are provided by arginine 173 and arginine 223. Glycine 266 and proline 267 together coordinate carbamoyl phosphate.

Belongs to the aspartate/ornithine carbamoyltransferase superfamily. ATCase family. Heterododecamer (2C3:3R2) of six catalytic PyrB chains organized as two trimers (C3), and six regulatory PyrI chains organized as three dimers (R2).

The enzyme catalyses carbamoyl phosphate + L-aspartate = N-carbamoyl-L-aspartate + phosphate + H(+). It functions in the pathway pyrimidine metabolism; UMP biosynthesis via de novo pathway; (S)-dihydroorotate from bicarbonate: step 2/3. Its function is as follows. Catalyzes the condensation of carbamoyl phosphate and aspartate to form carbamoyl aspartate and inorganic phosphate, the committed step in the de novo pyrimidine nucleotide biosynthesis pathway. The protein is Aspartate carbamoyltransferase catalytic subunit of Helicobacter pylori (strain HPAG1).